Reading from the N-terminus, the 620-residue chain is MSSGVQGGPAANANAYQTHPLRDAASALGTLSPQAYVDVVSAAQRNFLERMSQLASEQCDAQPAAHDARLDDKPALRAPQERDAPPLGASDTGSRASGAAKLTELLGVLMSVISASSLDELKQRSDIWNQMSKAAQDNLSRLSDAFHRATDEAKAAADAAEQAAAAAKQAGADAKAADAAVDAAQKRYDDAVKQGLPDDRLQSLKAALEQARQQAGDAHGRADALQADATKKLDAASALATQARACEQQVDDAVNQATQQYGASASLRTPQSPRLSGAAELTAVLGKLQELISSGNVKELESKQKLFTEMQAKREAELQKKSDEYQAQVKKAEEMQKTMGCIGKIVGWVITAVSFAAAAFTGGASLALAAVGLALAVGDEISRATTGVSFMDKLMQPVMDAILKPLMEMISSLITKALVACGVDQQKAELAGAILGAVVTGVALVAAAFVGASAVKAVASKVIDAMAGQLTKLMDSAIGKMLVQLIEKFSEKSGLQALGSRTATAMTRMRRAIGVEAKEDGMLLANRFEKAGTVMNVGNQVSQAAGGIVVGVERAKAMGLLADVKEAMYDIKLLGDLLKQAVDAFAEHNRVLAQLMQQMSDAGEMQTSTGKLILRNARAV.

Positions 58 to 95 (QCDAQPAAHDARLDDKPALRAPQERDAPPLGASDTGSR) are disordered. The span at 66–84 (HDARLDDKPALRAPQERDA) shows a compositional bias: basic and acidic residues. Positions 309–339 (EMQAKREAELQKKSDEYQAQVKKAEEMQKTM) form a coiled coil. 3 helical membrane passes run 355 to 375 (FAAA…GLAL), 401 to 421 (AILK…LVAC), and 430 to 450 (LAGA…AAFV).

The protein belongs to the SctE/SipB/YopB family.

The protein localises to the secreted. The protein resides in the host membrane. In terms of biological role, plays a role in the bacterium-induced formation of multinucleated giant cell (MNGC), which is formed after host cell fusion, as well as in the intercellular spreading of bacteria and in the induction of apoptosis in macrophages. May act in concert with other effector proteins to induce fusion of host cell membranes. The protein is Translocator protein BipB (bipB) of Burkholderia pseudomallei (strain 1106a).